The sequence spans 258 residues: Large ribosomal subunit protein uL5c (258 aa).

Residues M1–A38 constitute a chloroplast transit peptide.

As to quaternary structure, component of the chloroplast large ribosomal subunit (LSU). Mature 70S chloroplast ribosomes of higher plants consist of a small (30S) and a large (50S) subunit. The 30S small subunit contains 1 molecule of ribosomal RNA (16S rRNA) and 24 different proteins. The 50S large subunit contains 3 rRNA molecules (23S, 5S and 4.5S rRNA) and 33 different proteins.

It is found in the plastid. It localises to the chloroplast. In terms of biological role, component of the chloroplast ribosome (chloro-ribosome), a dedicated translation machinery responsible for the synthesis of chloroplast genome-encoded proteins, including proteins of the transcription and translation machinery and components of the photosynthetic apparatus. The chain is Large ribosomal subunit protein uL5c (RPL5) from Spinacia oleracea (Spinach).